The following is a 245-amino-acid chain: DNA repair protein RecO (245 aa).

Belongs to the RecO family.

Its function is as follows. Involved in DNA repair and RecF pathway recombination. In Erwinia tasmaniensis (strain DSM 17950 / CFBP 7177 / CIP 109463 / NCPPB 4357 / Et1/99), this protein is DNA repair protein RecO.